The following is a 711-amino-acid chain: Putative membrane protein ActII-3 (711 aa).

Helical transmembrane passes span 14-34, 175-195, 199-219, 235-255, 281-301, 313-333, 369-389, 516-536, 540-560, 573-593, 623-643, and 645-665; these read LKWL…PLAG, ADFK…VVTY, LLWL…QAIV, AMIL…LLVA, AIVA…LAAL, VGVL…LVIF, AVWV…VTLN, IIPV…RALV, LLIA…ALFF, FPLW…IFLV, AGLV…VFIA, and LGFT…SVLV. The tract at residues 685 to 711 is disordered; that stretch reads REDPSEDPAVSGMPDSIDSEASTTASR.

The protein belongs to the resistance-nodulation-cell division (RND) (TC 2.A.6) family. MmpL subfamily.

It is found in the cell membrane. The protein is Putative membrane protein ActII-3 (actII-3) of Streptomyces coelicolor (strain ATCC BAA-471 / A3(2) / M145).